We begin with the raw amino-acid sequence, 202 residues long: ATP-dependent Clp protease proteolytic subunit (202 aa).

The active-site Nucleophile is the serine 101. Histidine 126 is an active-site residue.

Belongs to the peptidase S14 family. Component of the chloroplastic Clp protease core complex.

The protein localises to the plastid. It localises to the chloroplast stroma. The catalysed reaction is Hydrolysis of proteins to small peptides in the presence of ATP and magnesium. alpha-casein is the usual test substrate. In the absence of ATP, only oligopeptides shorter than five residues are hydrolyzed (such as succinyl-Leu-Tyr-|-NHMec, and Leu-Tyr-Leu-|-Tyr-Trp, in which cleavage of the -Tyr-|-Leu- and -Tyr-|-Trp bonds also occurs).. Cleaves peptides in various proteins in a process that requires ATP hydrolysis. Has a chymotrypsin-like activity. Plays a major role in the degradation of misfolded proteins. The protein is ATP-dependent Clp protease proteolytic subunit of Calycanthus floridus var. glaucus (Eastern sweetshrub).